Here is a 173-residue protein sequence, read N- to C-terminus: MDVTIQHPWFKRALGPFYPSRLFDQFFGEGLFEYDLLPFLSSTISPYYRQSLFRTVLDSGISEVRSDRDQFLILLDVKHFSPEELTVKVLDDFVEIHGKHNERQDDHGYISREFHRRYRLPSNVDQSALSCSLSADGMLTFCGPKVQSSMDDGHSERAIPVSREEKPSSVPSS.

N-acetylmethionine is present on Met-1. Residues 1-63 form a required for complex formation with BFSP1 and BFSP2 region; it reads MDVTIQHPWF…RTVLDSGISE (63 aa). Position 6 is a deamidated glutamine; partial (Gln-6). Ser-45 carries the phosphoserine modification. At Gln-50 the chain carries Deamidated glutamine; partial. The region spanning 52 to 162 is the sHSP domain; the sequence is LFRTVLDSGI…GHSERAIPVS (111 aa). Lys-99 is subject to N6-acetyllysine. His-100 provides a ligand contact to Zn(2+). Asn-101 carries the deamidated asparagine; partial modification. Zn(2+)-binding residues include Glu-102 and His-107. A Phosphoserine modification is found at Ser-122. Position 123 is a deamidated asparagine; partial (Asn-123). An intrachain disulfide couples Cys-131 to Cys-142. Residues 146-173 form a disordered region; that stretch reads VQSSMDDGHSERAIPVSREEKPSSVPSS. Gln-147 carries the post-translational modification Deamidated glutamine; partial. Residues 151–167 show a composition bias toward basic and acidic residues; sequence DDGHSERAIPVSREEKP. His-154 contacts Zn(2+). A glycan (O-linked (GlcNAc) serine) is linked at Ser-162.

The protein belongs to the small heat shock protein (HSP20) family. In terms of assembly, heteromer composed of three CRYAA and one CRYAB subunits. Inter-subunit bridging via zinc ions enhances stability, which is crucial as there is no protein turn over in the lens. Can also form homodimers and homotetramers (dimers of dimers) which serve as the building blocks of homooligomers. Within homooligomers, the zinc-binding motif is created from residues of 3 different molecules. His-100 and Glu-102 from one molecule are ligands of the zinc ion, and His-107 and His-154 residues from additional molecules complete the site with tetrahedral coordination geometry. Part of a complex required for lens intermediate filament formation composed of BFSP1, BFSP2 and CRYAA. Undergoes age-dependent proteolytical cleavage at the C-terminus.

The protein localises to the cytoplasm. It is found in the nucleus. In terms of biological role, contributes to the transparency and refractive index of the lens. In its oxidized form (absence of intramolecular disulfide bond), acts as a chaperone, preventing aggregation of various proteins under a wide range of stress conditions. Required for the correct formation of lens intermediate filaments as part of a complex composed of BFSP1, BFSP2 and CRYAA. The polypeptide is Alpha-crystallin A chain (CRYAA) (Orycteropus afer (Aardvark)).